The primary structure comprises 149 residues: Protein FAM72A (149 aa).

It belongs to the FAM72 family. As to quaternary structure, interacts with UNG. Expressed at high levels in stomach and also in kidney and, at low levels, in heart (at protein level). In the stomach, highly expressed in foveolar cells, parietal cells and chief cells (at protein level). In kidney, expressed in endothelial cells, mesangial and epithelial cells (parietal and visceral epithelium) around glomerulus (at protein level).

The protein resides in the cytoplasm. The protein localises to the mitochondrion. May play a role in the regulation of cellular reactive oxygen species metabolism. May participate in cell growth regulation. The chain is Protein FAM72A (Fam72a) from Rattus norvegicus (Rat).